The following is a 530-amino-acid chain: Glucose-6-phosphate isomerase (530 aa).

The Proton donor role is filled by Glu-322. Residues His-351 and Lys-455 contribute to the active site.

Belongs to the GPI family.

The protein localises to the cytoplasm. The catalysed reaction is alpha-D-glucose 6-phosphate = beta-D-fructose 6-phosphate. It functions in the pathway carbohydrate biosynthesis; gluconeogenesis. Its pathway is carbohydrate degradation; glycolysis; D-glyceraldehyde 3-phosphate and glycerone phosphate from D-glucose: step 2/4. In terms of biological role, catalyzes the reversible isomerization of glucose-6-phosphate to fructose-6-phosphate. The polypeptide is Glucose-6-phosphate isomerase (Citrifermentans bemidjiense (strain ATCC BAA-1014 / DSM 16622 / JCM 12645 / Bem) (Geobacter bemidjiensis)).